Reading from the N-terminus, the 318-residue chain is Ribose-phosphate pyrophosphokinase (318 aa).

ATP is bound by residues 46–48 and 105–106; these read DGE and RQ. Mg(2+) is bound by residues His-139 and Asp-178. Lys-201 is an active-site residue. D-ribose 5-phosphate-binding positions include Arg-203, Asp-227, and 231–235; that span reads DTAGT.

The protein belongs to the ribose-phosphate pyrophosphokinase family. Class I subfamily. In terms of assembly, homohexamer. It depends on Mg(2+) as a cofactor.

It is found in the cytoplasm. It carries out the reaction D-ribose 5-phosphate + ATP = 5-phospho-alpha-D-ribose 1-diphosphate + AMP + H(+). It participates in metabolic intermediate biosynthesis; 5-phospho-alpha-D-ribose 1-diphosphate biosynthesis; 5-phospho-alpha-D-ribose 1-diphosphate from D-ribose 5-phosphate (route I): step 1/1. Its function is as follows. Involved in the biosynthesis of the central metabolite phospho-alpha-D-ribosyl-1-pyrophosphate (PRPP) via the transfer of pyrophosphoryl group from ATP to 1-hydroxyl of ribose-5-phosphate (Rib-5-P). This chain is Ribose-phosphate pyrophosphokinase, found in Helicobacter pylori (strain J99 / ATCC 700824) (Campylobacter pylori J99).